The sequence spans 156 residues: Ribosome maturation factor RimP (156 aa).

It belongs to the RimP family.

The protein resides in the cytoplasm. Functionally, required for maturation of 30S ribosomal subunits. The polypeptide is Ribosome maturation factor RimP (Oenococcus oeni (strain ATCC BAA-331 / PSU-1)).